The sequence spans 189 residues: Notch ligand osm-11 (189 aa).

The first 18 residues, Met1–Ala18, serve as a signal peptide directing secretion.

In terms of assembly, may interact with lin-12/Notch receptor. Expressed in coelomocytes (at protein level).

Its subcellular location is the apical cell membrane. Its function is as follows. Probable secreted lin-12/Notch ligand or co-ligand involved in the mediation of Notch signaling. Involved in the lin-12/Notch pathway signaling of cell fate in vulval precursor cells (VPCs), acting redundantly with dsl-1 and lag-2. Required for normal octanol avoidance response, acting via both lin-12/Notch and glp-1/Notch signaling pathways in neurons, in concert with lag-2. Involved in regulation of sleep-like quiescence during the larval to adult transition, acting via Notch receptor activation and in parallel with EGF signaling. The sequence is that of Notch ligand osm-11 from Caenorhabditis elegans.